A 738-amino-acid polypeptide reads, in one-letter code: DNA ligase (738 aa).

Residues 48 to 52, 97 to 98, and Glu-136 contribute to the NAD(+) site; these read DVVYD and SL. Lys-138 acts as the N6-AMP-lysine intermediate in catalysis. NAD(+) is bound by residues Arg-159, Glu-196, Lys-356, and Lys-380. Positions 474, 477, 492, and 497 each coordinate Zn(2+). The BRCT domain occupies 659-738; that stretch reads QLPQPLAGKT…SQLLELLEET (80 aa).

The protein belongs to the NAD-dependent DNA ligase family. LigA subfamily. Mg(2+) is required as a cofactor. Mn(2+) serves as cofactor.

It carries out the reaction NAD(+) + (deoxyribonucleotide)n-3'-hydroxyl + 5'-phospho-(deoxyribonucleotide)m = (deoxyribonucleotide)n+m + AMP + beta-nicotinamide D-nucleotide.. Functionally, DNA ligase that catalyzes the formation of phosphodiester linkages between 5'-phosphoryl and 3'-hydroxyl groups in double-stranded DNA using NAD as a coenzyme and as the energy source for the reaction. It is essential for DNA replication and repair of damaged DNA. In Cyanothece sp. (strain PCC 7425 / ATCC 29141), this protein is DNA ligase.